Reading from the N-terminus, the 874-residue chain is Alanine--tRNA ligase (874 aa).

4 residues coordinate Zn(2+): His-562, His-566, Cys-664, and His-668.

It belongs to the class-II aminoacyl-tRNA synthetase family. Requires Zn(2+) as cofactor.

It is found in the cytoplasm. The enzyme catalyses tRNA(Ala) + L-alanine + ATP = L-alanyl-tRNA(Ala) + AMP + diphosphate. Functionally, catalyzes the attachment of alanine to tRNA(Ala) in a two-step reaction: alanine is first activated by ATP to form Ala-AMP and then transferred to the acceptor end of tRNA(Ala). Also edits incorrectly charged Ser-tRNA(Ala) and Gly-tRNA(Ala) via its editing domain. The polypeptide is Alanine--tRNA ligase (Shewanella sediminis (strain HAW-EB3)).